Here is a 365-residue protein sequence, read N- to C-terminus: Class E basic helix-loop-helix protein 22 (365 aa).

3 disordered regions span residues A34–G93, G134–C156, and H188–K225. Over residues G82–G93 the composition is skewed to gly residues. The segment covering G191 to S216 has biased composition (gly residues). Residues A226 to Q280 enclose the bHLH domain.

As to quaternary structure, heterodimer with other bHLH proteins, like TCF3/E47. Kidney, lung, brain and pancreas (insulinoma).

The protein localises to the nucleus. Inhibits DNA binding of TCF3/E47 homodimers and TCF3 (E47)/NEUROD1 heterodimers and acts as a strong repressor of Neurod1 and Myod-responsive genes, probably by heterodimerization with class a basic helix-loop-helix factors. Despite the presence of an intact basic domain, does not bind to DNA. This is Class E basic helix-loop-helix protein 22 (BHLHE22) from Mesocricetus auratus (Golden hamster).